A 301-amino-acid polypeptide reads, in one-letter code: Oxygen-dependent coproporphyrinogen-III oxidase (301 aa).

Residue serine 90 participates in substrate binding. 2 residues coordinate a divalent metal cation: histidine 94 and histidine 104. The active-site Proton donor is histidine 104. 106–108 (NVR) contacts substrate. Residues histidine 143 and histidine 173 each contribute to the a divalent metal cation site. Positions 238 to 273 (YVEFNLVWDRGTLFGLQSGGRTESILMSLPPVVKWR) are important for dimerization. 256-258 (GGR) provides a ligand contact to substrate.

It belongs to the aerobic coproporphyrinogen-III oxidase family. In terms of assembly, homodimer. A divalent metal cation serves as cofactor.

It is found in the cytoplasm. It carries out the reaction coproporphyrinogen III + O2 + 2 H(+) = protoporphyrinogen IX + 2 CO2 + 2 H2O. The protein operates within porphyrin-containing compound metabolism; protoporphyrin-IX biosynthesis; protoporphyrinogen-IX from coproporphyrinogen-III (O2 route): step 1/1. In terms of biological role, involved in the heme biosynthesis. Catalyzes the aerobic oxidative decarboxylation of propionate groups of rings A and B of coproporphyrinogen-III to yield the vinyl groups in protoporphyrinogen-IX. This chain is Oxygen-dependent coproporphyrinogen-III oxidase, found in Nitrosomonas europaea (strain ATCC 19718 / CIP 103999 / KCTC 2705 / NBRC 14298).